A 345-amino-acid polypeptide reads, in one-letter code: MTDKTSLSYKDAGVDIDAGNALVDRIKGVVKKTRRPEVMGGLGGFGALCALPQKYREPVLVSGTDGVGTKLRLAMDLKRHDAIGIDLVAMCVNDLVVQGAEPLFFLDYYATGKLDVDTAASVINGIAEGCLQSGCALVGGETAEMPGMYHGEDYDVAGFCVGVVEKSEIIDGSRVAEGDVLIALGSSGPHSNGYSLVRKIIDVSGCDPQTTLLEGKPLADHLLEPTRIYVKSVLELIENVDVHAIAHLTGGGFWENIPRVLPENTQAVINESSWQWPAIFTWLQTAGNVSRHEMYRTFNCGVGMVIALSAPEADKALALLNEKGENAWKIGIIKASDSEQRVVIE.

This sequence belongs to the AIR synthase family.

The protein localises to the cytoplasm. It catalyses the reaction 2-formamido-N(1)-(5-O-phospho-beta-D-ribosyl)acetamidine + ATP = 5-amino-1-(5-phospho-beta-D-ribosyl)imidazole + ADP + phosphate + H(+). It functions in the pathway purine metabolism; IMP biosynthesis via de novo pathway; 5-amino-1-(5-phospho-D-ribosyl)imidazole from N(2)-formyl-N(1)-(5-phospho-D-ribosyl)glycinamide: step 2/2. The sequence is that of Phosphoribosylformylglycinamidine cyclo-ligase from Salmonella typhimurium (strain LT2 / SGSC1412 / ATCC 700720).